Reading from the N-terminus, the 1229-residue chain is Nuclear envelope pore membrane protein POM 121C (1229 aa).

Residues 1-10 (MSPAAAAAGA) are compositionally biased toward low complexity. The segment at 1-24 (MSPAAAAAGAGERRRPIASVRDGR) is disordered. Residues 1-40 (MSPAAAAAGAGERRRPIASVRDGRGRGCGGPAGAALLGLS) are cisternal side. The interval 1-398 (MSPAAAAAGA…AITSSYSSTR (398 aa)) is required for targeting to the nucleus and nuclear pore complex. Positions 11–24 (GERRRPIASVRDGR) are enriched in basic and acidic residues. The chain crosses the membrane as a helical span at residues 41 to 61 (LVGLLLYLVPAAAALAWLAVG). The pore side stretch occupies residues 62 to 1229 (TTAAWWGLSR…QARRQHTRKK (1168 aa)). S81 is modified (phosphoserine). Disordered stretches follow at residues 90 to 200 (RTLF…LPDR), 296 to 507 (KKKK…LGYS), 579 to 747 (KKMQ…TAPT), 936 to 966 (PLPS…ALTP), and 1202 to 1229 (PSFS…TRKK). Pro residues predominate over residues 155–166 (ARPAPRSTPPSQ). The segment covering 176-189 (PSLPTPLLRPSGRP) has biased composition (low complexity). Phosphoserine is present on residues S322, S328, S348, S370, and S373. Positions 374 to 400 (LTGAYTSGIPSSSRNAITSSYSSTRGI) are enriched in polar residues. The segment covering 409–422 (PSSSPFSSPASSRS) has biased composition (low complexity). 2 stretches are compositionally biased toward basic and acidic residues: residues 427 to 439 (RPAK…ELCH) and 449 to 463 (ADKE…DTTP). Positions 468 to 479 (NSNSQSTPGSSG) are enriched in polar residues. The segment covering 612–629 (PPLGLSQSGPPGLLPSPS) has biased composition (low complexity). Residues 660 to 673 (QAETATKPQATSAP) show a composition bias toward polar residues. Composition is skewed to low complexity over residues 689–703 (SPSS…SASP) and 726–747 (SVSA…TAPT). The span at 1219 to 1229 (LQARRQHTRKK) shows a compositional bias: basic residues.

The protein belongs to the POM121 family.

The protein resides in the nucleus. It localises to the nuclear pore complex. The protein localises to the nucleus membrane. Its subcellular location is the endoplasmic reticulum membrane. In terms of biological role, essential component of the nuclear pore complex (NPC). The repeat-containing domain may be involved in anchoring components of the pore complex to the pore membrane. When overexpressed in cells induces the formation of cytoplasmic annulate lamellae (AL). The polypeptide is Nuclear envelope pore membrane protein POM 121C (POM121C) (Homo sapiens (Human)).